A 443-amino-acid polypeptide reads, in one-letter code: ATP-dependent protease ATPase subunit HslU (443 aa).

ATP-binding positions include Ile18, 60 to 65 (GVGKTE), Asp256, Glu321, and Arg393.

This sequence belongs to the ClpX chaperone family. HslU subfamily. As to quaternary structure, a double ring-shaped homohexamer of HslV is capped on each side by a ring-shaped HslU homohexamer. The assembly of the HslU/HslV complex is dependent on binding of ATP.

The protein resides in the cytoplasm. In terms of biological role, ATPase subunit of a proteasome-like degradation complex; this subunit has chaperone activity. The binding of ATP and its subsequent hydrolysis by HslU are essential for unfolding of protein substrates subsequently hydrolyzed by HslV. HslU recognizes the N-terminal part of its protein substrates and unfolds these before they are guided to HslV for hydrolysis. This Buchnera aphidicola subsp. Acyrthosiphon pisum (strain APS) (Acyrthosiphon pisum symbiotic bacterium) protein is ATP-dependent protease ATPase subunit HslU.